The chain runs to 315 residues: Transaldolase (315 aa).

Catalysis depends on lysine 125, which acts as the Schiff-base intermediate with substrate.

It belongs to the transaldolase family. Type 1 subfamily. Homodimer.

The protein resides in the cytoplasm. It carries out the reaction D-sedoheptulose 7-phosphate + D-glyceraldehyde 3-phosphate = D-erythrose 4-phosphate + beta-D-fructose 6-phosphate. It functions in the pathway carbohydrate degradation; pentose phosphate pathway; D-glyceraldehyde 3-phosphate and beta-D-fructose 6-phosphate from D-ribose 5-phosphate and D-xylulose 5-phosphate (non-oxidative stage): step 2/3. Its function is as follows. Transaldolase is important for the balance of metabolites in the pentose-phosphate pathway. The chain is Transaldolase from Leptothrix cholodnii (strain ATCC 51168 / LMG 8142 / SP-6) (Leptothrix discophora (strain SP-6)).